The following is a 550-amino-acid chain: Hydroxylamine reductase (550 aa).

Residues C3, C6, C18, and C25 each contribute to the [2Fe-2S] cluster site. H249, E273, C317, C405, C433, C458, E492, and K494 together coordinate hybrid [4Fe-2O-2S] cluster. C405 is subject to Cysteine persulfide.

Belongs to the HCP family. It depends on [2Fe-2S] cluster as a cofactor. Hybrid [4Fe-2O-2S] cluster is required as a cofactor.

The protein resides in the cytoplasm. It catalyses the reaction A + NH4(+) + H2O = hydroxylamine + AH2 + H(+). Functionally, catalyzes the reduction of hydroxylamine to form NH(3) and H(2)O. The polypeptide is Hydroxylamine reductase (Salmonella dublin (strain CT_02021853)).